Consider the following 858-residue polypeptide: MSASVAEPPPALSRKAEFKAAKAELLARFKSANHVTPLMHALSRATDDALRSLWQECGLPATLALVAVGGFGRGELSPHSDVDILVLLPDAHASELDERIERFIGMAWDLGLEIGSSVRTVGQCIEEASHDVTVQTSLLEARRIVGSTALFERFMLRYREALDARAFFQAKVLEMRQRHAKFQDTPYSLEPNVKESPGGLRDLQTILWIARAAGFGSSWRELDTRGLITDREARELRRNEGFLKTLRARLHVIAGRRQDILVFDLQTQAAESFGYQPTSAKRASEQLMRRYYWAAKAVTQLATILIQNIEAQLFPATSGVTRVLSPGRFVEKQGMLEIAADDVFERHPDAILEAFLLYEATRGVKGLSARTLRALYNSRDVMNNAWRRDPRNRRTFMQILQQPEGITHAFRLMNQTSVLGRYLLNFRRIVGQMQHDLYHVYTVDQHILMVLRNIRRFAVAEHAHEYPFCSQLIVNFERPWVLYVAALFHDIAKGRGGDHSALGMADARRFCREHGIEGDDAALVVWLVQHHLTMSQVAQKQDTSDPVVIKRFAELVGSERRLTALYLLTVADIRGTSPKVWNTWKGKLLEDLYRATLAVLGGAQPDAHSELKTRQEEALALLRLETVPPDAHRALWDQLDVGYFLRHDAADIAWQTRVLYRHVAADTAIVRARPSPVGDALQVLVYVKDRSDLFAGICAYFDRNGLSVLDARVNTTRHGYALDNFIVTQTEHDVQYRDIANLVEQQLAARLAESAPLPEPSKGRLSRLSRTFPITPRVDLRADERGQYYILSVSANDRPGLLYSIARVLAEHRVGVHAARINTLGERVEDVFMLDGTGLSDNRLQIQVETELLRAIAV.

The segment at 1–324 (MSASVAEPPP…PATSGVTRVL (324 aa)) is uridylyltransferase. The tract at residues 325 to 681 (SPGRFVEKQG…ARPSPVGDAL (357 aa)) is uridylyl-removing. Positions 443-565 (VDQHILMVLR…VGSERRLTAL (123 aa)) constitute an HD domain. 2 consecutive ACT domains span residues 682-761 (QVLV…PEPS) and 790-858 (ILSV…AIAV).

It belongs to the GlnD family. Mg(2+) is required as a cofactor.

It catalyses the reaction [protein-PII]-L-tyrosine + UTP = [protein-PII]-uridylyl-L-tyrosine + diphosphate. The catalysed reaction is [protein-PII]-uridylyl-L-tyrosine + H2O = [protein-PII]-L-tyrosine + UMP + H(+). With respect to regulation, uridylyltransferase (UTase) activity is inhibited by glutamine, while glutamine activates uridylyl-removing (UR) activity. In terms of biological role, modifies, by uridylylation and deuridylylation, the PII regulatory proteins (GlnB and homologs), in response to the nitrogen status of the cell that GlnD senses through the glutamine level. Under low glutamine levels, catalyzes the conversion of the PII proteins and UTP to PII-UMP and PPi, while under higher glutamine levels, GlnD hydrolyzes PII-UMP to PII and UMP (deuridylylation). Thus, controls uridylylation state and activity of the PII proteins, and plays an important role in the regulation of nitrogen assimilation and metabolism. The chain is Bifunctional uridylyltransferase/uridylyl-removing enzyme from Burkholderia pseudomallei (strain K96243).